We begin with the raw amino-acid sequence, 462 residues long: Juvenile hormone epoxide hydrolase (462 aa).

Residues 4–24 (ILSSFVAGVAIGSGLVITYVL) traverse the membrane as a helical segment. Aspartate 227 (nucleophile) is an active-site residue. Residue tyrosine 372 is the Proton donor of the active site. The Proton acceptor role is filled by histidine 428.

This sequence belongs to the peptidase S33 family.

It is found in the microsome membrane. Its subcellular location is the endoplasmic reticulum membrane. It catalyses the reaction cis-stilbene oxide + H2O = (1R,2R)-hydrobenzoin. The catalysed reaction is 1-(4-methoxyphenyl)-N-methyl-N-[(3-methyloxetan-3-yl)methyl]methanamine + H2O = 2-{[(4-methoxybenzyl)(methyl)amino]methyl}-2-methylpropane-1,3-diol. Its function is as follows. Catalyzes juvenile hormone hydrolysis. In Manduca sexta (Tobacco hawkmoth), this protein is Juvenile hormone epoxide hydrolase.